Reading from the N-terminus, the 371-residue chain is Queuine tRNA-ribosyltransferase (371 aa).

Aspartate 89 functions as the Proton acceptor in the catalytic mechanism. Substrate is bound by residues 89 to 93 (DSGGF), aspartate 143, glutamine 185, and glycine 212. The segment at 243 to 249 (GVGKPED) is RNA binding. Aspartate 262 functions as the Nucleophile in the catalytic mechanism. The RNA binding; important for wobble base 34 recognition stretch occupies residues 267 to 271 (TRNAR). Zn(2+) contacts are provided by cysteine 300, cysteine 302, cysteine 305, and histidine 331.

It belongs to the queuine tRNA-ribosyltransferase family. Homodimer. Within each dimer, one monomer is responsible for RNA recognition and catalysis, while the other monomer binds to the replacement base PreQ1. Requires Zn(2+) as cofactor.

It carries out the reaction 7-aminomethyl-7-carbaguanine + guanosine(34) in tRNA = 7-aminomethyl-7-carbaguanosine(34) in tRNA + guanine. The protein operates within tRNA modification; tRNA-queuosine biosynthesis. Functionally, catalyzes the base-exchange of a guanine (G) residue with the queuine precursor 7-aminomethyl-7-deazaguanine (PreQ1) at position 34 (anticodon wobble position) in tRNAs with GU(N) anticodons (tRNA-Asp, -Asn, -His and -Tyr). Catalysis occurs through a double-displacement mechanism. The nucleophile active site attacks the C1' of nucleotide 34 to detach the guanine base from the RNA, forming a covalent enzyme-RNA intermediate. The proton acceptor active site deprotonates the incoming PreQ1, allowing a nucleophilic attack on the C1' of the ribose to form the product. After dissociation, two additional enzymatic reactions on the tRNA convert PreQ1 to queuine (Q), resulting in the hypermodified nucleoside queuosine (7-(((4,5-cis-dihydroxy-2-cyclopenten-1-yl)amino)methyl)-7-deazaguanosine). In Azotobacter vinelandii (strain DJ / ATCC BAA-1303), this protein is Queuine tRNA-ribosyltransferase.